Consider the following 381-residue polypeptide: Cell division protein FtsZ (381 aa).

The tract at residues 1 to 25 (MKFINDAIKESEKREKPSSSSMNSE) is disordered. The span at 7–17 (AIKESEKREKP) shows a compositional bias: basic and acidic residues. Residues 48-52 (GAGNN), 135-137 (GTG), Glu-166, Arg-170, and Asp-213 each bind GTP.

The protein belongs to the FtsZ family. In terms of assembly, homodimer. Polymerizes to form a dynamic ring structure in a strictly GTP-dependent manner. Interacts directly with several other division proteins.

Its subcellular location is the cytoplasm. Essential cell division protein that forms a contractile ring structure (Z ring) at the future cell division site. The regulation of the ring assembly controls the timing and the location of cell division. One of the functions of the FtsZ ring is to recruit other cell division proteins to the septum to produce a new cell wall between the dividing cells. Binds GTP and shows GTPase activity. The chain is Cell division protein FtsZ from Methanothermobacter thermautotrophicus (strain ATCC 29096 / DSM 1053 / JCM 10044 / NBRC 100330 / Delta H) (Methanobacterium thermoautotrophicum).